The chain runs to 294 residues: Protein huluwa (294 aa).

Residues 1 to 23 (MSQLGSAVPSSNLPEGLPVSSLA) are Extracellular-facing. A helical membrane pass occupies residues 24-44 (LLILVLIPCVLLLLLLNCLFV). Residues 45–294 (GYKLFRMTRR…PPITTKQYWV (250 aa)) are Cytoplasmic-facing. The tract at residues 154–175 (SDSDMERVNTVPPNSPVLRVTP) is disordered. The short motif at 164 to 169 (VPPNSP) is the VPPNSP motif element. Residues 184–190 (SLRRSST) carry the SLRRSST motif motif.

The protein belongs to the huluwa family. As to quaternary structure, interacts with axin1; leading to promote the tankyrase-mediated degradation of axin. Interacts with axin2; leading to promote the tankyrase-mediated degradation of axin.

The protein localises to the cell membrane. Key maternal determinant of the dorsal organizer and body axis formation in vertebrates that acts by promoting stabilization of beta-catenin (ctnnb1). Localizes on the plasma membrane of the future dorsal blastomeres in early blastulas and binds to and promotes the tankyrase-mediated degradation of axin (axin1 and axin2). Axin degradation results in stabilization and nuclear translocation of beta-catenin (ctnnb1) for activating organizer-specific target gene expression. The polypeptide is Protein huluwa (Danio rerio (Zebrafish)).